Here is a 158-residue protein sequence, read N- to C-terminus: Cyclic pyranopterin monophosphate synthase (158 aa).

Residues 75–77 (LCH) and 113–114 (ME) each bind substrate. Aspartate 128 is a catalytic residue.

The protein belongs to the MoaC family. As to quaternary structure, homohexamer; trimer of dimers.

The enzyme catalyses (8S)-3',8-cyclo-7,8-dihydroguanosine 5'-triphosphate = cyclic pyranopterin phosphate + diphosphate. The protein operates within cofactor biosynthesis; molybdopterin biosynthesis. Catalyzes the conversion of (8S)-3',8-cyclo-7,8-dihydroguanosine 5'-triphosphate to cyclic pyranopterin monophosphate (cPMP). The protein is Cyclic pyranopterin monophosphate synthase of Ralstonia pickettii (strain 12J).